The following is a 368-amino-acid chain: 4-hydroxy-3-methylbut-2-en-1-yl diphosphate synthase (flavodoxin) (368 aa).

[4Fe-4S] cluster is bound by residues C268, C271, C303, and E310.

This sequence belongs to the IspG family. [4Fe-4S] cluster is required as a cofactor.

The enzyme catalyses (2E)-4-hydroxy-3-methylbut-2-enyl diphosphate + oxidized [flavodoxin] + H2O + 2 H(+) = 2-C-methyl-D-erythritol 2,4-cyclic diphosphate + reduced [flavodoxin]. Its pathway is isoprenoid biosynthesis; isopentenyl diphosphate biosynthesis via DXP pathway; isopentenyl diphosphate from 1-deoxy-D-xylulose 5-phosphate: step 5/6. Its function is as follows. Converts 2C-methyl-D-erythritol 2,4-cyclodiphosphate (ME-2,4cPP) into 1-hydroxy-2-methyl-2-(E)-butenyl 4-diphosphate. The chain is 4-hydroxy-3-methylbut-2-en-1-yl diphosphate synthase (flavodoxin) from Listeria monocytogenes serotype 4b (strain CLIP80459).